Here is a 312-residue protein sequence, read N- to C-terminus: DNA-directed RNA polymerase subunit alpha (312 aa).

The alpha N-terminal domain (alpha-NTD) stretch occupies residues 1–226 (MIEFKKPNIT…EHFKAFESAD (226 aa)). Residues 243-312 (KEKKLEMTIE…DLGLSLRQED (70 aa)) are alpha C-terminal domain (alpha-CTD).

The protein belongs to the RNA polymerase alpha chain family. In terms of assembly, homodimer. The RNAP catalytic core consists of 2 alpha, 1 beta, 1 beta' and 1 omega subunit. When a sigma factor is associated with the core the holoenzyme is formed, which can initiate transcription.

It carries out the reaction RNA(n) + a ribonucleoside 5'-triphosphate = RNA(n+1) + diphosphate. Its function is as follows. DNA-dependent RNA polymerase catalyzes the transcription of DNA into RNA using the four ribonucleoside triphosphates as substrates. The polypeptide is DNA-directed RNA polymerase subunit alpha (Lactobacillus delbrueckii subsp. bulgaricus (strain ATCC 11842 / DSM 20081 / BCRC 10696 / JCM 1002 / NBRC 13953 / NCIMB 11778 / NCTC 12712 / WDCM 00102 / Lb 14)).